The following is a 2065-amino-acid chain: Cytoskeleton-associated protein 5-A (2065 aa).

2 TOG regions span residues 1–240 (MGDD…DLKA) and 264–515 (VDAY…KETK). HEAT repeat units lie at residues 120–157 (EKAE…EFGS), 160–197 (MTLK…WIRD), 270–311 (LEAV…NPKI), 314–352 (GDFA…GLRK), 356–393 (SYAG…TTTL), 395–432 (NISE…STLP), and 436–477 (LKPF…VNPF). Positions 500 to 574 (NGKKGGAAAG…GATAKGKKAV (75 aa)) are disordered. A compositionally biased stretch (low complexity) spans 538-568 (KAAAAPKKAPAAKPGGPVKKAKAPASSGATA). A TOG 3 region spans residues 644 to 808 (KPGFKETNFQ…LSQIDAEFEK (165 aa)). HEAT repeat units lie at residues 652–689 (FQVM…KVGD) and 748–785 (INVK…YMGA). The disordered stretch occupies residues 809–849 (MKGQTPPVSIRGSKHGSGRDEGEEGEEQDEDAPADVTDLLP). A compositionally biased stretch (acidic residues) spans 829–841 (EGEEGEEQDEDAP). The segment at 846–1090 (DLLPRTDISD…AGPPGKASSK (245 aa)) is TOG 4. HEAT repeat units lie at residues 852 to 889 (DISD…EAKF), 892 to 929 (PSIG…AMGH), 933 to 970 (QHVK…QTGM), and 1015 to 1052 (CVPY…KMSK). Positions 1074–1115 (ASMPAKPAGPPGKASSKQPPAVAQASASPPPAASSDSGSSTS) are enriched in low complexity. The tract at residues 1074-1192 (ASMPAKPAGP…AKDEEDKSGP (119 aa)) is disordered. Over residues 1126 to 1163 (PGTQASKAKTQSVSSEGNTSLNPSNTSLTPSKANTSLS) the composition is skewed to polar residues. The interaction with microtubule lattice stretch occupies residues 1150-1235 (NTSLTPSKAN…IEQLKTQMSP (86 aa)). The tract at residues 1191 to 1460 (GPIYIIVPNG…ERIKRAGKKQ (270 aa)) is TOG 5. HEAT repeat units follow at residues 1251-1288 (QRQI…RFFD), 1295-1318 (MKCL…LTEM), 1319-1355 (EGTS…VYPA), 1357-1390 (KMFN…SYGM), and 1395-1432 (PTPA…VHGE). 2 disordered regions span residues 1982–2001 (DNAK…KSSA) and 2028–2065 (VELD…SSRK). Positions 2002–2065 (PAVVSSTDML…RLERIKSSRK (64 aa)) are interaction with tacc3. The span at 2038–2048 (STTTSSSASST) shows a compositional bias: low complexity. Positions 2051-2065 (DDLKKRLERIKSSRK) are enriched in basic and acidic residues.

This sequence belongs to the TOG/XMAP215 family. As to quaternary structure, interacts with tacc3; two molecules of ckap5 interact with 1 molecule of tacc3 probably mediated by coiled coil domains forming a four-helix bundle. Interacts with tacc3 and clathrin forming the TACC3/ch-TOG/clathrin complex located at spindle inter-microtubules bridges. Interacts with ndc80; indicative for an association with the NDC80 comnplex.

It localises to the cytoplasm. It is found in the cytoskeleton. The protein resides in the spindle pole. The protein localises to the spindle. Its subcellular location is the microtubule organizing center. It localises to the centrosome. It is found in the chromosome. The protein resides in the centromere. The protein localises to the kinetochore. Binds to the plus end of microtubules and regulates microtubule dynamics and microtubule organization. Acts as a processive microtubule polymerase. Promotes cytoplasmic microtubule nucleation and elongation. Plays a major role in organizing spindle poles. In spindle formation protects kinetochore microtubules from depolymerization by kif2c and has an essential role in centrosomal microtubule assembly independently of kif2c activity. Contributes to centrosome integrity. Acts as a component of the TACC3/ch-TOG/clathrin complex proposed to contribute to stabilization of kinetochore fibers of the mitotic spindle by acting as inter-microtubule bridge. Enhances the strength of NDC80 complex-mediated kinetochore-tip microtubule attachments. This Xenopus laevis (African clawed frog) protein is Cytoskeleton-associated protein 5-A (ckap5-a).